Here is a 196-residue protein sequence, read N- to C-terminus: Imidazoleglycerol-phosphate dehydratase (196 aa).

Belongs to the imidazoleglycerol-phosphate dehydratase family.

It is found in the cytoplasm. It catalyses the reaction D-erythro-1-(imidazol-4-yl)glycerol 3-phosphate = 3-(imidazol-4-yl)-2-oxopropyl phosphate + H2O. The protein operates within amino-acid biosynthesis; L-histidine biosynthesis; L-histidine from 5-phospho-alpha-D-ribose 1-diphosphate: step 6/9. The polypeptide is Imidazoleglycerol-phosphate dehydratase (Clostridium botulinum (strain Langeland / NCTC 10281 / Type F)).